Consider the following 367-residue polypeptide: Glycerol dehydrogenase (367 aa).

Asp37, Gly94, Lys95, Thr116, and Ser119 together coordinate NAD(+). Asp121 contributes to the glycerol binding site. NAD(+) is bound by residues Ser125, Leu127, and Tyr131. Zn(2+) is bound by residues Asp171, His254, and His271. Residue His254 participates in glycerol binding.

Belongs to the iron-containing alcohol dehydrogenase family. Requires Zn(2+) as cofactor.

The enzyme catalyses glycerol + NAD(+) = dihydroxyacetone + NADH + H(+). It participates in polyol metabolism; glycerol fermentation; glycerone phosphate from glycerol (oxidative route): step 1/2. In terms of biological role, catalyzes the NAD-dependent oxidation of glycerol to dihydroxyacetone (glycerone). Allows microorganisms to utilize glycerol as a source of carbon under anaerobic conditions. In Escherichia coli O6:H1 (strain CFT073 / ATCC 700928 / UPEC), this protein is Glycerol dehydrogenase (gldA).